We begin with the raw amino-acid sequence, 430 residues long: Asparagine--tRNA ligase (430 aa).

This sequence belongs to the class-II aminoacyl-tRNA synthetase family. Homodimer.

The protein resides in the cytoplasm. It catalyses the reaction tRNA(Asn) + L-asparagine + ATP = L-asparaginyl-tRNA(Asn) + AMP + diphosphate + H(+). This chain is Asparagine--tRNA ligase, found in Staphylococcus epidermidis (strain ATCC 35984 / DSM 28319 / BCRC 17069 / CCUG 31568 / BM 3577 / RP62A).